We begin with the raw amino-acid sequence, 301 residues long: MNPQDIKTALGSGLLSFPVTHFHADGRFNAESYKQHIEWLAGYDAPVLFAAGGTGEFFSLAPSEIPGIVSAAKEAAGKTAIVAGCGFGSVVGVEIAKAAEKAGADGLLLLPHYLIDAPQEGLYALVKQICDAVGIGVMVYNRDNSVLGVETLARLCDACPNLVGFKDGTGQIGLVRQITATMGDRLIYLGGMPTAELFAEAYLGAGFTTYSSAVFNFVPGLAVEFYRALRAGDRPTCERLLRDFFYPFMAIRNRRKGYAVAAIKAGVRLQGFAAGPVRAPLDDLTIEEEAMLDALIGTWKR.

This sequence belongs to the DapA family.

It catalyses the reaction 5-dehydro-4-deoxy-D-glucarate + H(+) = 2,5-dioxopentanoate + CO2 + H2O. Its pathway is carbohydrate acid metabolism; D-glucarate degradation; 2,5-dioxopentanoate from D-glucarate: step 2/2. The chain is Probable 5-dehydro-4-deoxyglucarate dehydratase from Xanthobacter autotrophicus (strain ATCC BAA-1158 / Py2).